The primary structure comprises 446 residues: B3 domain-containing protein REM12 (446 aa).

The disordered stretch occupies residues 1-46 (MVLNSSDLGPSRCDIRDLPAPSSTNDQGKTELARKKKVKRSNTEIE). DNA-binding regions (TF-B3) lie at residues 56–153 (CFVA…FCST) and 193–289 (FMTL…VNTQ). A disordered region spans residues 295–334 (SQQGECSRDSEKESSICAEPSRGNKKWKATNNRKERRDSS). A DNA-binding region (TF-B3 3) is located at residues 341 to 435 (YVTLTLTPED…TTPVFKFCSN (95 aa)).

It is found in the nucleus. This Arabidopsis thaliana (Mouse-ear cress) protein is B3 domain-containing protein REM12 (REM12).